The sequence spans 230 residues: Methyltransferase aurB (230 aa).

Belongs to the methyltransferase superfamily.

It functions in the pathway polyketide biosynthesis. Methyltransferase; part of the gene cluster that mediates the biosynthesis of aurovertins, fungal polyketides that exhibit potent inhibition of adenosine triphosphate synthase. Tha biosynthesis starts with the HR-PKS aurA that selects propionate as the starter unit; synthesizes a hexa-ene chain through the repeated functions of the KR and DH domains in the first six iterations; selectively introduces three alpha-methyl substitutions at C4, C6, and C16 using the S-adensylmethionine-dependent cMET; and shuts off KR and DH in the last three iterations to afford a 1,3,5-triketo portion that can undergo intramolecular cyclization to yield the alpha-pyrone intermediate. AurE may act as a cyclase and enhances the rate of pyrone formation and product release of aurA. The methyltransferase aurB then methylates the C17 hydroxyl group. C17 methylation is required to initiate epoxidation by the downstream monooxygenase aurC. The monooxygenase aurC and the epoxide hydrolase aurD can iteratively transform the terminal triene portion of the methylated precursor into the dioxabicyclo[3.2.1]octane scaffold of aurovertin E. Epoxidation modifications of the precursor occur in two separate steps; bis-epoxidation of the two terminal olefins takes place first, followed by another epoxidation that occurs at C7-C8 after tetrahydrofuran formation. The O-acyltransferase aurG converts aurovertin E to aurovertin A. The sequence is that of Methyltransferase aurB from Calcarisporium arbuscula (Dendryphion arbuscula).